A 129-amino-acid chain; its full sequence is Small ribosomal subunit protein uS11 (129 aa).

As to quaternary structure, part of the 30S ribosomal subunit. Interacts with proteins S7 and S18. Binds to IF-3. In terms of processing, may be methylated on an undetermined residue.

Located on the platform of the 30S subunit, it bridges several disparate RNA helices of the 16S rRNA. Forms part of the Shine-Dalgarno cleft in the 70S ribosome. This chain is Small ribosomal subunit protein uS11, found in Rhodopseudomonas palustris (strain ATCC BAA-98 / CGA009).